The sequence spans 225 residues: ATP-dependent dethiobiotin synthetase BioD (225 aa).

12–17 contacts ATP; the sequence is GVGKTV. Thr16 contributes to the Mg(2+) binding site. The active site involves Lys37. Thr41 contacts substrate. ATP-binding positions include Asp49, 108–111, and 197–199; these read EGAG and PAG. Mg(2+) contacts are provided by Asp49 and Glu108.

This sequence belongs to the dethiobiotin synthetase family. In terms of assembly, homodimer. It depends on Mg(2+) as a cofactor.

It localises to the cytoplasm. It catalyses the reaction (7R,8S)-7,8-diammoniononanoate + CO2 + ATP = (4R,5S)-dethiobiotin + ADP + phosphate + 3 H(+). It participates in cofactor biosynthesis; biotin biosynthesis; biotin from 7,8-diaminononanoate: step 1/2. Its function is as follows. Catalyzes a mechanistically unusual reaction, the ATP-dependent insertion of CO2 between the N7 and N8 nitrogen atoms of 7,8-diaminopelargonic acid (DAPA, also called 7,8-diammoniononanoate) to form a ureido ring. The sequence is that of ATP-dependent dethiobiotin synthetase BioD from Mycolicibacterium smegmatis (strain ATCC 700084 / mc(2)155) (Mycobacterium smegmatis).